We begin with the raw amino-acid sequence, 89 residues long: Small ribosomal subunit protein uS15 (89 aa).

This sequence belongs to the universal ribosomal protein uS15 family. As to quaternary structure, part of the 30S ribosomal subunit. Forms a bridge to the 50S subunit in the 70S ribosome, contacting the 23S rRNA.

Its function is as follows. One of the primary rRNA binding proteins, it binds directly to 16S rRNA where it helps nucleate assembly of the platform of the 30S subunit by binding and bridging several RNA helices of the 16S rRNA. Forms an intersubunit bridge (bridge B4) with the 23S rRNA of the 50S subunit in the ribosome. In Brucella abortus (strain S19), this protein is Small ribosomal subunit protein uS15.